Here is a 425-residue protein sequence, read N- to C-terminus: Putative nucleoside transporter YegT (425 aa).

Topologically, residues 1 to 8 (MKTTAKLS) are periplasmic. The chain crosses the membrane as a helical span at residues 9–29 (FMMFVEWFIWGAWFVPLWLWL). Residues 30-38 (SKSGFSAGE) lie on the Cytoplasmic side of the membrane. The helical transmembrane segment at 39–59 (IGWSYACTAIAAILSPILVGS) threads the bilayer. Over 60–63 (ITDR) the chain is Periplasmic. A helical transmembrane segment spans residues 64 to 84 (FFSAQKVLAVLMFAGALLMYF). Residues 85–90 (AAQQTT) lie on the Cytoplasmic side of the membrane. A helical transmembrane segment spans residues 91–111 (FAGFFPLLLAYSLTYMPTIAL). The Periplasmic portion of the chain corresponds to 112–131 (TNSIAFANVPDVERDFPRIR). A helical transmembrane segment spans residues 132 to 152 (VMGTIGWIASGLACGFLPQIL). At 153–161 (GYADISPTN) the chain is on the cytoplasmic side. A helical membrane pass occupies residues 162 to 182 (IPLLITAGSSALLGVFAFFLP). Residues 183 to 210 (DTPPKSTGKMDIKVMLGLDALILLRDKN) are Periplasmic-facing. Residues 211 to 231 (FLVFFFCSFLFAMPLAFYYIF) form a helical membrane-spanning segment. Residues 232 to 244 (ANGYLTEVGMKNA) lie on the Cytoplasmic side of the membrane. The helical transmembrane segment at 245 to 265 (TGWMTLGQFSEIFFMLALPFF) threads the bilayer. At 266-287 (TKRFGIKKVLLLGLVTAAIRYG) the chain is on the periplasmic side. Residues 288–308 (FFIYGSADEYFTYALLFLGIL) form a helical membrane-spanning segment. The Cytoplasmic portion of the chain corresponds to 309 to 339 (LHGVSYDFYYVTAYIYVDKKAPVHMRTAAQG). Residues 340–360 (LITLCCQGFGSLLGYRLGGVM) traverse the membrane as a helical segment. At 361 to 379 (MEKMFAYQEPVNGLTFNWS) the chain is on the periplasmic side. The chain crosses the membrane as a helical span at residues 380–400 (GMWTFGAVMIAIIAVLFMIFF). Topologically, residues 401–425 (RESDNEITAIKVDDRDIALTQGEVK) are cytoplasmic.

This sequence belongs to the major facilitator superfamily. Nucleoside:H(+) symporter (NHS) (TC 2.A.1.10) family.

The protein resides in the cell inner membrane. In terms of biological role, could be involved in nucleoside transport. This Escherichia coli (strain K12) protein is Putative nucleoside transporter YegT (yegT).